The chain runs to 95 residues: Small ribosomal subunit protein bS20 (95 aa).

Disordered regions lie at residues 1-26 (MALR…RSRK) and 76-95 (KSRL…AQPA). The segment covering 80 to 95 (AKALNKAKAAQAAQPA) has biased composition (low complexity).

The protein belongs to the bacterial ribosomal protein bS20 family.

Binds directly to 16S ribosomal RNA. The chain is Small ribosomal subunit protein bS20 from Deinococcus geothermalis (strain DSM 11300 / CIP 105573 / AG-3a).